The primary structure comprises 264 residues: Phosphoribosylaminoimidazole-succinocarboxamide synthase 1 (264 aa).

It belongs to the SAICAR synthetase family.

The enzyme catalyses 5-amino-1-(5-phospho-D-ribosyl)imidazole-4-carboxylate + L-aspartate + ATP = (2S)-2-[5-amino-1-(5-phospho-beta-D-ribosyl)imidazole-4-carboxamido]succinate + ADP + phosphate + 2 H(+). The protein operates within purine metabolism; IMP biosynthesis via de novo pathway; 5-amino-1-(5-phospho-D-ribosyl)imidazole-4-carboxamide from 5-amino-1-(5-phospho-D-ribosyl)imidazole-4-carboxylate: step 1/2. This Mesorhizobium japonicum (strain LMG 29417 / CECT 9101 / MAFF 303099) (Mesorhizobium loti (strain MAFF 303099)) protein is Phosphoribosylaminoimidazole-succinocarboxamide synthase 1 (purC1).